A 428-amino-acid polypeptide reads, in one-letter code: Light-independent protochlorophyllide reductase subunit N (428 aa).

Positions 29, 54, and 115 each coordinate [4Fe-4S] cluster.

This sequence belongs to the BchN/ChlN family. Protochlorophyllide reductase is composed of three subunits; BchL, BchN and BchB. Forms a heterotetramer of two BchB and two BchN subunits. [4Fe-4S] cluster serves as cofactor.

The catalysed reaction is chlorophyllide a + oxidized 2[4Fe-4S]-[ferredoxin] + 2 ADP + 2 phosphate = protochlorophyllide a + reduced 2[4Fe-4S]-[ferredoxin] + 2 ATP + 2 H2O. It participates in porphyrin-containing compound metabolism; bacteriochlorophyll biosynthesis (light-independent). Functionally, component of the dark-operative protochlorophyllide reductase (DPOR) that uses Mg-ATP and reduced ferredoxin to reduce ring D of protochlorophyllide (Pchlide) to form chlorophyllide a (Chlide). This reaction is light-independent. The NB-protein (BchN-BchB) is the catalytic component of the complex. In Cereibacter sphaeroides (strain ATCC 17025 / ATH 2.4.3) (Rhodobacter sphaeroides), this protein is Light-independent protochlorophyllide reductase subunit N.